Reading from the N-terminus, the 273-residue chain is Embryonic polyadenylate-binding protein 2 (273 aa).

The disordered stretch occupies residues Ser22–Glu57. In terms of domain architecture, RRM spans Arg143 to Thr220.

Its subcellular location is the cytoplasm. Binds the poly(A) tail of mRNA. This is Embryonic polyadenylate-binding protein 2 (Pabpn1l) from Mus musculus (Mouse).